The sequence spans 291 residues: Methionine aminopeptidase (291 aa).

Histidine 118 provides a ligand contact to substrate. Aspartate 135, aspartate 146, and histidine 209 together coordinate a divalent metal cation. Histidine 216 provides a ligand contact to substrate. The a divalent metal cation site is built by glutamate 241 and glutamate 273.

Belongs to the peptidase M24A family. Methionine aminopeptidase type 1 subfamily. As to quaternary structure, monomer. Co(2+) serves as cofactor. It depends on Zn(2+) as a cofactor. The cofactor is Mn(2+). Requires Fe(2+) as cofactor.

The enzyme catalyses Release of N-terminal amino acids, preferentially methionine, from peptides and arylamides.. Functionally, removes the N-terminal methionine from nascent proteins. The N-terminal methionine is often cleaved when the second residue in the primary sequence is small and uncharged (Met-Ala-, Cys, Gly, Pro, Ser, Thr, or Val). Requires deformylation of the N(alpha)-formylated initiator methionine before it can be hydrolyzed. In Chlamydia muridarum (strain MoPn / Nigg), this protein is Methionine aminopeptidase.